A 225-amino-acid polypeptide reads, in one-letter code: Small ribosomal subunit protein uS3 (225 aa).

The 69-residue stretch at 38 to 106 (LRAHLRRKLS…DVALNIVEIR (69 aa)) folds into the KH type-2 domain.

This sequence belongs to the universal ribosomal protein uS3 family. As to quaternary structure, part of the 30S ribosomal subunit. Forms a tight complex with proteins S10 and S14.

Its function is as follows. Binds the lower part of the 30S subunit head. Binds mRNA in the 70S ribosome, positioning it for translation. The protein is Small ribosomal subunit protein uS3 of Gluconacetobacter diazotrophicus (strain ATCC 49037 / DSM 5601 / CCUG 37298 / CIP 103539 / LMG 7603 / PAl5).